The sequence spans 341 residues: MSLALTLGDPAGIGPEILLKALAHLPSELLGQFFIAGTGQVLEETYARLCQQGQVAIDPAQLQLWEHPLDEVIVPGRPSVASGTASFAYLKTAIQRAIAGEVAGIVTAPISKACWQAAGYSFPGQTEVLAHLTGTAHVGMLFLGRSPVTHWVLTTLLATTHIPLQAVPRALTPEGLNEKLALLIQFLRERRHLERPRIAIAGLNPHSGEQGHLGQEEVTWLIPWLAAAQQQYPEVELIGPVPPDTLWIGAADAWWGRPAPATAYDAYLALYHDQGLIPVKMLAFREAVNTTIGLPFIRTSPDHGTAFDIAGTGVADPQSFLAAIAWAQTLSKGSVFPLTLA.

Thr-126 lines the substrate pocket. Positions 161, 206, and 272 each coordinate a divalent metal cation. Substrate is bound by residues Lys-280, Asn-289, and Arg-298.

This sequence belongs to the PdxA family. In terms of assembly, homodimer. It depends on a divalent metal cation as a cofactor.

It is found in the cytoplasm. The catalysed reaction is 4-(phosphooxy)-L-threonine + NAD(+) = 3-amino-2-oxopropyl phosphate + CO2 + NADH. It participates in cofactor biosynthesis; pyridoxine 5'-phosphate biosynthesis; pyridoxine 5'-phosphate from D-erythrose 4-phosphate: step 4/5. Functionally, catalyzes the NAD(P)-dependent oxidation of 4-(phosphooxy)-L-threonine (HTP) into 2-amino-3-oxo-4-(phosphooxy)butyric acid which spontaneously decarboxylates to form 3-amino-2-oxopropyl phosphate (AHAP). The protein is 4-hydroxythreonine-4-phosphate dehydrogenase of Thermosynechococcus vestitus (strain NIES-2133 / IAM M-273 / BP-1).